The sequence spans 350 residues: Histidinol-phosphate aminotransferase 2 (350 aa).

Lys-210 is subject to N6-(pyridoxal phosphate)lysine.

Belongs to the class-II pyridoxal-phosphate-dependent aminotransferase family. Histidinol-phosphate aminotransferase subfamily. In terms of assembly, homodimer. It depends on pyridoxal 5'-phosphate as a cofactor.

It catalyses the reaction L-histidinol phosphate + 2-oxoglutarate = 3-(imidazol-4-yl)-2-oxopropyl phosphate + L-glutamate. The protein operates within amino-acid biosynthesis; L-histidine biosynthesis; L-histidine from 5-phospho-alpha-D-ribose 1-diphosphate: step 7/9. This Mannheimia succiniciproducens (strain KCTC 0769BP / MBEL55E) protein is Histidinol-phosphate aminotransferase 2.